Consider the following 95-residue polypeptide: Succinate dehydrogenase membrane anchor subunit (95 aa).

Topologically, residues 1–19 are mitochondrial matrix; sequence MYKTLLAQVFFHSIAKKKL. The helical transmembrane segment at 20-40 threads the bilayer; the sequence is YFFWLPRLFSLLLVPGFLFDI. Position 41 (E41) is a topological domain, mitochondrial intermembrane. The chain crosses the membrane as a helical span at residues 42–62; it reads ILFLFHPIILLHASLGLSVII. H53 provides a ligand contact to heme. At 63–74 the chain is on the mitochondrial matrix side; sequence EDYIHIETIKFQ. Y65 contacts a ubiquinone. Residues 75–95 form a helical membrane-spanning segment; sequence YLSLIKLLLVLLINLNILYLL.

In terms of assembly, part of an enzyme complex containing four subunits: a flavoprotein, an iron-sulfur protein, plus two membrane-anchoring proteins. It depends on heme as a cofactor.

The protein resides in the mitochondrion inner membrane. Its pathway is carbohydrate metabolism; tricarboxylic acid cycle. Membrane-anchoring subunit of succinate dehydrogenase (SDH). The sequence is that of Succinate dehydrogenase membrane anchor subunit (SDH4) from Porphyra purpurea (Red seaweed).